The following is a 202-amino-acid chain: Securin (202 aa).

The tract at residues 36 to 55 is disordered; that stretch reads DGRSQVSTPHVGKMFDAPPA. The short motif at 61–64 is the D-box element; it reads RKAL. Short sequence motifs (TEK-box) lie at residues 71–73 and 94–96; these read TEK. The short motif at 163-173 is the SH3-binding element; it reads PPSPLKMPPLL. Ser165 is subject to Phosphoserine; by CDK1.

This sequence belongs to the securin family. Interacts with RPS10 and DNAJA1. Interacts with the caspase-like ESPL1, and prevents its protease activity probably by covering its active site. Interacts with TP53 and blocks its activity probably by blocking its binding to DNA. Interacts with the Ku 70 kDa subunit of ds-DNA kinase. Interacts with PTTG1IP. In terms of processing, phosphorylated at Ser-165 by CDK1 during mitosis. Phosphorylated in vitro by ds-DNA kinase. Post-translationally, ubiquitinated through 'Lys-11' linkage of ubiquitin moieties by the anaphase promoting complex (APC) at the onset of anaphase, conducting to its degradation. 'Lys-11'-linked ubiquitination is mediated by the E2 ligase UBE2C/UBCH10.

The protein localises to the cytoplasm. It is found in the nucleus. In terms of biological role, regulatory protein, which plays a central role in chromosome stability, in the p53/TP53 pathway, and DNA repair. Probably acts by blocking the action of key proteins. During the mitosis, it blocks Separase/ESPL1 function, preventing the proteolysis of the cohesin complex and the subsequent segregation of the chromosomes. At the onset of anaphase, it is ubiquitinated, conducting to its destruction and to the liberation of ESPL1. Its function is however not limited to a blocking activity, since it is required to activate ESPL1. Negatively regulates the transcriptional activity and related apoptosis activity of TP53. The negative regulation of TP53 may explain the strong transforming capability of the protein when it is overexpressed. May also play a role in DNA repair via its interaction with Ku, possibly by connecting DNA damage-response pathways with sister chromatid separation. This is Securin (PTTG1) from Bos taurus (Bovine).